Consider the following 104-residue polypeptide: SOSS complex subunit C (104 aa).

This sequence belongs to the SOSS-C family. As to quaternary structure, belongs to the multiprotein complex Integrator. Component of the SOSS complex, composed of SOSS-B (SOSS-B1/NABP2 or SOSS-B2/NABP1), SOSS-A/INTS3 and SOSS-C/INIP.

It is found in the nucleus. Functionally, component of the SOSS complex, a multiprotein complex that functions downstream of the MRN complex to promote DNA repair and G2/M checkpoint. The SOSS complex associates with single-stranded DNA at DNA lesions and influences diverse endpoints in the cellular DNA damage response including cell-cycle checkpoint activation, recombinational repair and maintenance of genomic stability. Required for efficient homologous recombination-dependent repair of double-strand breaks (DSBs). This chain is SOSS complex subunit C (INIP), found in Taeniopygia guttata (Zebra finch).